Reading from the N-terminus, the 306-residue chain is Porphobilinogen deaminase (306 aa).

An S-(dipyrrolylmethanemethyl)cysteine modification is found at cysteine 240.

The protein belongs to the HMBS family. Monomer. It depends on dipyrromethane as a cofactor.

It catalyses the reaction 4 porphobilinogen + H2O = hydroxymethylbilane + 4 NH4(+). Its pathway is porphyrin-containing compound metabolism; protoporphyrin-IX biosynthesis; coproporphyrinogen-III from 5-aminolevulinate: step 2/4. Its function is as follows. Tetrapolymerization of the monopyrrole PBG into the hydroxymethylbilane pre-uroporphyrinogen in several discrete steps. This Thiobacillus denitrificans (strain ATCC 25259 / T1) protein is Porphobilinogen deaminase.